A 121-amino-acid chain; its full sequence is Tachykinin-3 (121 aa).

Residues 1 to 16 form the signal peptide; that stretch reads MRIMLLFTAILAFSLA. Positions 17 to 78 are excised as a propeptide; sequence QSFGAVCKEP…TDPKESTSPE (62 aa). M90 is modified (methionine amide). The tract at residues 93 to 121 is disordered; the sequence is RSVQPDSPTDVNQENVPSFGILKYPPRAE. A propeptide spanning residues 94-121 is cleaved from the precursor; the sequence is SVQPDSPTDVNQENVPSFGILKYPPRAE. A compositionally biased stretch (polar residues) spans 96–108; the sequence is QPDSPTDVNQENV.

This sequence belongs to the tachykinin family.

The protein resides in the secreted. Its function is as follows. Tachykinins are active peptides which excite neurons, evoke behavioral responses, are potent vasodilators and secretagogues, and contract (directly or indirectly) many smooth muscles. Is a critical central regulator of gonadal function. In Homo sapiens (Human), this protein is Tachykinin-3 (TAC3).